The primary structure comprises 104 residues: MGGYKGIKADGGKVDQAKQLAAKTAKDIEACQKQTQQLAEYIEGSDWEGQFANKVKDVLLIMAKFQEELVQPIADHQKAIDNLSQNLAKYDTLSIKQGLDRVNP.

The protein belongs to the WXG100 family. In terms of assembly, homodimer. When mixed with EsxA does not form heterodimers.

The protein resides in the secreted. In terms of biological role, virulence factor that is important for the establishment of infection in the host. EsxB is required for EsxA synthesis as well as secretion. Mediates together with EsxA the release of S.aureus from the host cell. Also inhibits host cytokine production and thus modulates dendritic cell-mediated immunity. The chain is Type VII secretion system extracellular protein B from Staphylococcus aureus (strain MSSA476).